Here is a 269-residue protein sequence, read N- to C-terminus: Putative pyruvate, phosphate dikinase regulatory protein (269 aa).

147–154 (GLSRTSKT) lines the ADP pocket.

The protein belongs to the pyruvate, phosphate/water dikinase regulatory protein family. PDRP subfamily.

It catalyses the reaction N(tele)-phospho-L-histidyl/L-threonyl-[pyruvate, phosphate dikinase] + ADP = N(tele)-phospho-L-histidyl/O-phospho-L-threonyl-[pyruvate, phosphate dikinase] + AMP + H(+). The enzyme catalyses N(tele)-phospho-L-histidyl/O-phospho-L-threonyl-[pyruvate, phosphate dikinase] + phosphate + H(+) = N(tele)-phospho-L-histidyl/L-threonyl-[pyruvate, phosphate dikinase] + diphosphate. Functionally, bifunctional serine/threonine kinase and phosphorylase involved in the regulation of the pyruvate, phosphate dikinase (PPDK) by catalyzing its phosphorylation/dephosphorylation. In Clostridium botulinum (strain ATCC 19397 / Type A), this protein is Putative pyruvate, phosphate dikinase regulatory protein.